A 1136-amino-acid polypeptide reads, in one-letter code: Mitochondrial 3' processome subunit 3 (1136 aa).

Residues 1–97 (MKKAWAQLER…RGLVCTTVGD (97 aa)) constitute a mitochondrion transit peptide.

As to quaternary structure, component of the mitochondrial 3' processome (MPsome) complex composed at least of terminal uridylyltransferase KRET1/TUT1, 3'-5' exonuclease DSS1, MPSS1, MPSS2 and MPSS3. Within the complex, interacts with KRET1.

It is found in the mitochondrion. Functionally, as part of the mitochondrial 3' processome (MPsome), involved in the maturation of guided RNA (gRNA) precursors. The polypeptide is Mitochondrial 3' processome subunit 3 (Trypanosoma brucei brucei).